Consider the following 298-residue polypeptide: GTPase Era (298 aa).

Positions 7–174 constitute an Era-type G domain; it reads RSGFVSIIGR…VELVRKALPQ (168 aa). The interval 15–22 is G1; that stretch reads GRPNVGKS. 15–22 is a GTP binding site; sequence GRPNVGKS. Residues 41 to 45 form a G2 region; sequence QTTRN. Residues 62 to 65 are G3; the sequence is DTPG. Residues 62 to 66 and 124 to 127 contribute to the GTP site; these read DTPGI and NKVD. Residues 124–127 form a G4 region; the sequence is NKVD. The tract at residues 153–155 is G5; it reads ISA. The KH type-2 domain maps to 205-283; the sequence is TRDEVPYATA…FLELFVRVRK (79 aa).

The protein belongs to the TRAFAC class TrmE-Era-EngA-EngB-Septin-like GTPase superfamily. Era GTPase family. As to quaternary structure, monomer.

It is found in the cytoplasm. It localises to the cell inner membrane. An essential GTPase that binds both GDP and GTP, with rapid nucleotide exchange. Plays a role in 16S rRNA processing and 30S ribosomal subunit biogenesis and possibly also in cell cycle regulation and energy metabolism. This is GTPase Era from Geobacter metallireducens (strain ATCC 53774 / DSM 7210 / GS-15).